A 336-amino-acid polypeptide reads, in one-letter code: Nuclear egress protein 2 (336 aa).

Residues 1 to 315 are Perinuclear space-facing; that stretch reads MASPEERLLD…AWRYSWRATP (315 aa). Disordered regions lie at residues 193 to 221 and 277 to 297; these read RSGQ…GCLG and RTRE…VPPE. Positions 277–288 are enriched in basic residues; it reads RTRETRRMRGSH. The helical transmembrane segment at 316–333 threads the bilayer; the sequence is YLARVLAVTAVALLLMFL. Topologically, residues 334-336 are nuclear; the sequence is RWT.

The protein belongs to the herpesviridae NEC2 protein family. Forms a heterodimeric viral nuclear egress complex (NEC) with NEC1. Interacts with host IKBKE; this interaction inhibits host IKBKE kinase activity and IRF3 nuclear translocation. Post-translationally, phosphorylated.

The protein localises to the host nucleus inner membrane. It localises to the host cytoplasm. It is found in the host perinuclear region. Functionally, plays an essential role in virion nuclear egress, the first step of virion release from infected cell. Within the host nucleus, NEC1 interacts with the newly formed capsid through the vertexes and directs it to the inner nuclear membrane by associating with NEC2. Induces the budding of the capsid at the inner nuclear membrane as well as its envelopment into the perinuclear space. There, the NEC1/NEC2 complex promotes the fusion of the enveloped capsid with the outer nuclear membrane and the subsequent release of the viral capsid into the cytoplasm where it will reach the secondary budding sites in the host Golgi or trans-Golgi network. Inhibits host IKBKE and IRF3, thereby impairing type I IFN signaling. In Homo sapiens (Human), this protein is Nuclear egress protein 2.